Here is a 233-residue protein sequence, read N- to C-terminus: Orotidine 5'-phosphate decarboxylase (233 aa).

Substrate is bound by residues Asp9, Lys31, 58–67 (DLKLHDIPNT), Thr120, Arg182, Gln191, Gly211, and Arg212. Residue Lys60 is the Proton donor of the active site.

This sequence belongs to the OMP decarboxylase family. Type 1 subfamily. In terms of assembly, homodimer.

The enzyme catalyses orotidine 5'-phosphate + H(+) = UMP + CO2. It participates in pyrimidine metabolism; UMP biosynthesis via de novo pathway; UMP from orotate: step 2/2. In terms of biological role, catalyzes the decarboxylation of orotidine 5'-monophosphate (OMP) to uridine 5'-monophosphate (UMP). The sequence is that of Orotidine 5'-phosphate decarboxylase from Listeria monocytogenes serovar 1/2a (strain ATCC BAA-679 / EGD-e).